The chain runs to 212 residues: uncharacterized protein (212 aa).

This sequence belongs to the IIV-6 309L family.

This is an uncharacterized protein from Aedes vexans (Inland floodwater mosquito).